The following is a 343-amino-acid chain: 3-dehydroquinate synthase (343 aa).

NAD(+)-binding positions include 86 to 90 (GALLD), 110 to 111 (TT), lysine 123, and lysine 132. Zn(2+) contacts are provided by glutamate 165, histidine 229, and histidine 243.

It belongs to the sugar phosphate cyclases superfamily. Dehydroquinate synthase family. Co(2+) serves as cofactor. Zn(2+) is required as a cofactor. It depends on NAD(+) as a cofactor.

Its subcellular location is the cytoplasm. The enzyme catalyses 7-phospho-2-dehydro-3-deoxy-D-arabino-heptonate = 3-dehydroquinate + phosphate. It functions in the pathway metabolic intermediate biosynthesis; chorismate biosynthesis; chorismate from D-erythrose 4-phosphate and phosphoenolpyruvate: step 2/7. Its function is as follows. Catalyzes the conversion of 3-deoxy-D-arabino-heptulosonate 7-phosphate (DAHP) to dehydroquinate (DHQ). The protein is 3-dehydroquinate synthase of Pyrobaculum islandicum (strain DSM 4184 / JCM 9189 / GEO3).